Here is a 1336-residue protein sequence, read N- to C-terminus: Adhesion G protein-coupled receptor A2 (1336 aa).

An N-terminal signal peptide occupies residues 1–33 (MGAGGRRMPVPPARLLLLPLLPCLLLLAPGTRG). Residues 34–769 (APGCPVPIRG…AGGSGAGLHP (736 aa)) lie on the Extracellular side of the membrane. 2 N-linked (GlcNAc...) asparagine glycosylation sites follow: Asn84 and Asn101. 4 LRR repeats span residues 85-106 (GTIT…SFLG), 109-130 (LLEK…AFLG), 133-154 (ELKR…TFQG), and 157-178 (RLLR…VFDE). N-linked (GlcNAc...) asparagine glycosylation is present at Asn162. One can recognise an LRRCT domain in the interval 190–241 (EFLTCDCRLRWLLPWARNHSLQLSERTLCAYPSALHAHALSSLQESQLRCEG). An Ig-like domain is found at 247–344 (THYLIPSLRQ…GNTSKKVEIV (98 aa)). A disulfide bridge connects residues Cys268 and Cys328. Asn275 carries an N-linked (GlcNAc...) asparagine glycan. The short motif at 362–364 (RGD) is the RGD element. Residues 594–757 (FRCTTGRPNI…AVLMELNAFP (164 aa)) form the GAIN-B domain. N-linked (GlcNAc...) asparagine glycosylation is found at Asn602, Asn691, and Asn735. Positions 711–757 (AAWWNQDGPGGWSSEGCRLRYSQPNVSSLYCQHLGNVAVLMELNAFP) are GPS. Cys727 and Cys741 are disulfide-bonded. Residues 770–790 (VVYPCTALLLLCLFSTIITYI) form a helical membrane-spanning segment. Over 791-805 (LNHSSIHVSRKGWHM) the chain is Cytoplasmic. A helical membrane pass occupies residues 806 to 826 (LLNLCFHMAMTSAVFVGGVTL). Residues 827–830 (TNYQ) are Extracellular-facing. A helical transmembrane segment spans residues 831–851 (MVCQAVGITLHYSSLSSLLWM). At 852–884 (GVKARVLHKELSWRAPPLEEGEAAPPGPRPMLR) the chain is on the cytoplasmic side. A helical transmembrane segment spans residues 885–905 (FYLIAGGIPLIICGITAAVNI). The Extracellular segment spans residues 906 to 922 (HNYRDHSPYCWLVWRPS). A helical membrane pass occupies residues 923–943 (LGAFYIPVALILPITWIYFLC). The Cytoplasmic portion of the chain corresponds to 944–1016 (AGLHLRSHVA…DGVYSPGVQL (73 aa)). A helical membrane pass occupies residues 1017-1037 (GALMTTHFLYLAMWACGALAV). The Extracellular portion of the chain corresponds to 1038-1044 (SQRWLPR). The chain crosses the membrane as a helical span at residues 1045–1065 (VVCSCLYGVAASALGLFVFTH). Topologically, residues 1066-1336 (HCARRRDVRA…TGLWKSETTV (271 aa)) are cytoplasmic. Residues 1084–1095 (ASPSASHVPARA) show a composition bias toward low complexity. Residues 1084–1310 (ASPSASHVPA…NGAPKGGKYE (227 aa)) form a disordered region. At Ser1104 the chain carries Phosphoserine. A compositionally biased stretch (low complexity) spans 1110–1124 (GPASLKSSPSGSSGR). Residues 1133–1143 (TNLQVAQSQVC) show a composition bias toward polar residues. The segment covering 1166–1186 (PRHHNNLHHGRRVHKSRAKGH) has biased composition (basic residues). Polar residues predominate over residues 1213–1234 (SSESGSLHNSPSDSYPGSSRNS). The PDZ-binding motif lies at 1333 to 1336 (ETTV).

This sequence belongs to the G-protein coupled receptor 2 family. Adhesion G-protein coupled receptor (ADGR) subfamily. As to quaternary structure, interacts with RECK; the interaction is direct. Interacts (via PDZ-binding motif) with DLG1 (via PDZ domains). The cleaved extracellular subunit interacts with the integrin heterodimer ITGAV:ITGB3. In terms of processing, glycosylated. Proteolytically cleaved into two subunits, an extracellular subunit and a seven-transmembrane subunit. Cleaved by thrombin (F2) and MMP1. Also cleaved by MMP9, with lower efficiency. Presence of the protein disulfide-isomerase P4HB at the cell surface is additionally required for shedding of the extracellular subunit, suggesting that the subunits are linked by disulfide bonds. Shedding is enhanced by the growth factor FGF2 and may promote cell survival during angiogenesis. As to expression, abundantly expressed in the vasculature of the developing embryo. Expression in normal adult tissues is specifically vascular with endothelial expression in CNS, including brain and retina and more widespread pericyte expression in the brain and organs, including the kidney, pancreas and corpus luteum.

Its subcellular location is the cell membrane. It localises to the cell projection. It is found in the filopodium. Functionally, endothelial receptor which functions together with RECK to enable brain endothelial cells to selectively respond to Wnt7 signals (WNT7A or WNT7B). Plays a key role in Wnt7-specific responses, such as endothelial cell sprouting and migration in the forebrain and neural tube, and establishment of the blood-brain barrier. Acts as a Wnt7-specific coactivator of canonical Wnt signaling: required to deliver RECK-bound Wnt7 to frizzled by assembling a higher-order RECK-ADGRA2-Fzd-LRP5-LRP6 complex. ADGRA2-tethering function does not rely on its G-protein coupled receptor (GPCR) structure but instead on its combined capacity to interact with RECK extracellularly and recruit the Dishevelled scaffolding protein intracellularly. Binds to the glycosaminoglycans heparin, heparin sulfate, chondroitin sulfate and dermatan sulfate. This Mus musculus (Mouse) protein is Adhesion G protein-coupled receptor A2.